The sequence spans 967 residues: Sulfite dehydrogenase subunit A (967 aa).

The 4Fe-4S Mo/W bis-MGD-type domain occupies 15–71; it reads VEVKETTCYMCACRCGIRVHLRDGEVRYIDGNPNHPLNKGVICAKGSSGIMKQYSPG. [4Fe-4S] cluster-binding residues include Cys22, Cys25, Cys29, and Cys57.

It belongs to the prokaryotic molybdopterin-containing oxidoreductase family. In terms of assembly, forms a heterotrimeric membrane-bound complex composed of a catalytic heterodimer (SoeAB) and a membrane anchor protein (SoeC). Requires [4Fe-4S] cluster as cofactor. Mo-bis(molybdopterin guanine dinucleotide) serves as cofactor.

The protein localises to the cell inner membrane. It carries out the reaction a quinone + sulfite + H2O = a quinol + sulfate. It catalyses the reaction a menaquinone + sulfite + H2O = a menaquinol + sulfate. Functionally, part of the SoeABC complex that catalyzes the oxidation of sulfite to sulfate. In Allochromatium vinosum (strain ATCC 17899 / DSM 180 / NBRC 103801 / NCIMB 10441 / D) (Chromatium vinosum), this protein is Sulfite dehydrogenase subunit A.